The sequence spans 352 residues: Holliday junction branch migration complex subunit RuvB (352 aa).

The large ATPase domain (RuvB-L) stretch occupies residues 4-191; that stretch reads TDKFSAPDRV…FGIVARLEFY (188 aa). Residues Leu30, Arg31, Gly72, Lys75, Thr76, Thr77, 138 to 140, Arg181, Tyr191, and Arg228 contribute to the ATP site; that span reads EDY. Thr76 is a binding site for Mg(2+). The tract at residues 192–262 is small ATPAse domain (RuvB-S); the sequence is TAEELARIVT…IADAALAMLD (71 aa). The segment at 265–352 is head domain (RuvB-H); the sequence is RVGFDLMDRK…GDSGDLIDGE (88 aa). Arg301, Arg320, and Arg325 together coordinate DNA.

It belongs to the RuvB family. In terms of assembly, homohexamer. Forms an RuvA(8)-RuvB(12)-Holliday junction (HJ) complex. HJ DNA is sandwiched between 2 RuvA tetramers; dsDNA enters through RuvA and exits via RuvB. An RuvB hexamer assembles on each DNA strand where it exits the tetramer. Each RuvB hexamer is contacted by two RuvA subunits (via domain III) on 2 adjacent RuvB subunits; this complex drives branch migration. In the full resolvosome a probable DNA-RuvA(4)-RuvB(12)-RuvC(2) complex forms which resolves the HJ.

The protein localises to the cytoplasm. It carries out the reaction ATP + H2O = ADP + phosphate + H(+). Its function is as follows. The RuvA-RuvB-RuvC complex processes Holliday junction (HJ) DNA during genetic recombination and DNA repair, while the RuvA-RuvB complex plays an important role in the rescue of blocked DNA replication forks via replication fork reversal (RFR). RuvA specifically binds to HJ cruciform DNA, conferring on it an open structure. The RuvB hexamer acts as an ATP-dependent pump, pulling dsDNA into and through the RuvAB complex. RuvB forms 2 homohexamers on either side of HJ DNA bound by 1 or 2 RuvA tetramers; 4 subunits per hexamer contact DNA at a time. Coordinated motions by a converter formed by DNA-disengaged RuvB subunits stimulates ATP hydrolysis and nucleotide exchange. Immobilization of the converter enables RuvB to convert the ATP-contained energy into a lever motion, pulling 2 nucleotides of DNA out of the RuvA tetramer per ATP hydrolyzed, thus driving DNA branch migration. The RuvB motors rotate together with the DNA substrate, which together with the progressing nucleotide cycle form the mechanistic basis for DNA recombination by continuous HJ branch migration. Branch migration allows RuvC to scan DNA until it finds its consensus sequence, where it cleaves and resolves cruciform DNA. In Cupriavidus pinatubonensis (strain JMP 134 / LMG 1197) (Cupriavidus necator (strain JMP 134)), this protein is Holliday junction branch migration complex subunit RuvB.